Consider the following 653-residue polypeptide: Probable sulfate transporter 3.4 (653 aa).

Topologically, residues 1-92 (MGHGTNRVED…QYDLKLLRSD (92 aa)) are cytoplasmic. The chain crosses the membrane as a helical span at residues 93–113 (VISGLTIASLAIPQGISYAKL). At 114–115 (AN) the chain is on the extracellular side. Residues 116–136 (LPPIVGLYSSFVPPLIYAVLG) form a helical membrane-spanning segment. The Cytoplasmic segment spans residues 137–140 (SSRH). Residues 141–161 (LAVGPVSIASLVMGSMLSESV) form a helical membrane-spanning segment. Residues 162-167 (SPTQDS) lie on the Extracellular side of the membrane. A helical membrane pass occupies residues 168–188 (ILYLKLAFTSTFFAGVFQASL). Residues 189–194 (GLLRLG) lie on the Cytoplasmic side of the membrane. The helical transmembrane segment at 195–215 (FMIDFLSKATLIGFTAGAAVI) threads the bilayer. Over 216–247 (VSLQQLKGLLGIVHFTGKMQIVPVMSSVFNHR) the chain is Extracellular. The chain crosses the membrane as a helical span at residues 248-268 (SEWSWETIVMGIGFLSILLTT). Residues 269–279 (RHISMRKPKLF) are Cytoplasmic-facing. The chain crosses the membrane as a helical span at residues 280 to 300 (WISAASPLASVIISTLLVYLI). At 301-331 (RSKTHAISFIGHLPKGLNPPSLNMLYFSGAH) the chain is on the extracellular side. Residues 332–352 (LALAIKTGIITGILSLTEGIA) form a helical membrane-spanning segment. Over 353–370 (VGRTFASLKNYQVNGNKE) the chain is Cytoplasmic. The helical transmembrane segment at 371 to 391 (MMAIGFMNMAGSCTSCYVTTG) threads the bilayer. Residues 392 to 407 (SFSRSAVNYNAGAKTA) lie on the Extracellular side of the membrane. A helical membrane pass occupies residues 408-428 (VSNIVMASAVLVTLLFLMPLF). Residues 429 to 433 (YYTPN) lie on the Cytoplasmic side of the membrane. The helical transmembrane segment at 434–454 (VILAAIILTAVIGLIDYQAAY) threads the bilayer. Over 455-471 (KLWKVDKFDFFTCLCSF) the chain is Extracellular. A helical transmembrane segment spans residues 472 to 492 (FGVLFVSVPLGLAIAVAVSVI). Residues 493–653 (KILLHVTRPN…SSTWKANGQP (161 aa)) are Cytoplasmic-facing. The region spanning 520–643 (RYREASRIPG…LTVGEAVADL (124 aa)) is the STAS domain.

This sequence belongs to the SLC26A/SulP transporter (TC 2.A.53) family.

It localises to the membrane. Functionally, h(+)/sulfate cotransporter that may play a role in the regulation of sulfate assimilation. In Arabidopsis thaliana (Mouse-ear cress), this protein is Probable sulfate transporter 3.4 (SULTR3;4).